The primary structure comprises 270 residues: UPF0246 protein Psyc_0554 (270 aa).

It belongs to the UPF0246 family.

This Psychrobacter arcticus (strain DSM 17307 / VKM B-2377 / 273-4) protein is UPF0246 protein Psyc_0554.